The chain runs to 215 residues: S-crystallin 3 (215 aa).

In terms of domain architecture, GST N-terminal spans 2–80 (PSYTLHYFNH…YLAREFGYHG (79 aa)). Positions 82–215 (SNMEMARVDF…YLKKRCRTDF (134 aa)) constitute a GST C-terminal domain.

This sequence belongs to the GST superfamily. In terms of tissue distribution, lens.

In terms of biological role, S-crystallins are structural components of squids and octopi eye lens. Contains relatively little if any GST activity. This is S-crystallin 3 from Enteroctopus dofleini (North Pacific giant octopus).